The following is a 227-amino-acid chain: Cytochrome c oxidase subunit 2 (227 aa).

Residues 1 to 14 are Mitochondrial intermembrane-facing; the sequence is MAHAAQVGLQDATS. Residues 15 to 45 traverse the membrane as a helical segment; the sequence is PIMEELIIFHDHALMIIFLICFLVLYALFLT. Over 46–59 the chain is Mitochondrial matrix; that stretch reads LTTKLTNTSISDAQ. Residues 60–87 traverse the membrane as a helical segment; the sequence is EMETVWTILPAIILVLIALPSLRILYMT. Over 88-227 the chain is Mitochondrial intermembrane; sequence DEVNDPSFTI…IFEMGPVFTL (140 aa). H161, C196, E198, C200, H204, and M207 together coordinate Cu cation. E198 provides a ligand contact to Mg(2+).

The protein belongs to the cytochrome c oxidase subunit 2 family. In terms of assembly, component of the cytochrome c oxidase (complex IV, CIV), a multisubunit enzyme composed of 14 subunits. The complex is composed of a catalytic core of 3 subunits MT-CO1, MT-CO2 and MT-CO3, encoded in the mitochondrial DNA, and 11 supernumerary subunits COX4I, COX5A, COX5B, COX6A, COX6B, COX6C, COX7A, COX7B, COX7C, COX8 and NDUFA4, which are encoded in the nuclear genome. The complex exists as a monomer or a dimer and forms supercomplexes (SCs) in the inner mitochondrial membrane with NADH-ubiquinone oxidoreductase (complex I, CI) and ubiquinol-cytochrome c oxidoreductase (cytochrome b-c1 complex, complex III, CIII), resulting in different assemblies (supercomplex SCI(1)III(2)IV(1) and megacomplex MCI(2)III(2)IV(2)). Found in a complex with TMEM177, COA6, COX18, COX20, SCO1 and SCO2. Interacts with TMEM177 in a COX20-dependent manner. Interacts with COX20. Interacts with COX16. Cu cation is required as a cofactor.

The protein resides in the mitochondrion inner membrane. It catalyses the reaction 4 Fe(II)-[cytochrome c] + O2 + 8 H(+)(in) = 4 Fe(III)-[cytochrome c] + 2 H2O + 4 H(+)(out). Functionally, component of the cytochrome c oxidase, the last enzyme in the mitochondrial electron transport chain which drives oxidative phosphorylation. The respiratory chain contains 3 multisubunit complexes succinate dehydrogenase (complex II, CII), ubiquinol-cytochrome c oxidoreductase (cytochrome b-c1 complex, complex III, CIII) and cytochrome c oxidase (complex IV, CIV), that cooperate to transfer electrons derived from NADH and succinate to molecular oxygen, creating an electrochemical gradient over the inner membrane that drives transmembrane transport and the ATP synthase. Cytochrome c oxidase is the component of the respiratory chain that catalyzes the reduction of oxygen to water. Electrons originating from reduced cytochrome c in the intermembrane space (IMS) are transferred via the dinuclear copper A center (CU(A)) of subunit 2 and heme A of subunit 1 to the active site in subunit 1, a binuclear center (BNC) formed by heme A3 and copper B (CU(B)). The BNC reduces molecular oxygen to 2 water molecules using 4 electrons from cytochrome c in the IMS and 4 protons from the mitochondrial matrix. This is Cytochrome c oxidase subunit 2 (MT-CO2) from Pan paniscus (Pygmy chimpanzee).